The primary structure comprises 435 residues: ATP-dependent protease ATPase subunit HslU (435 aa).

ATP contacts are provided by residues I18, 60–65, D248, E313, and R385; that span reads GVGKTE.

The protein belongs to the ClpX chaperone family. HslU subfamily. In terms of assembly, a double ring-shaped homohexamer of HslV is capped on each side by a ring-shaped HslU homohexamer. The assembly of the HslU/HslV complex is dependent on binding of ATP.

The protein resides in the cytoplasm. Functionally, ATPase subunit of a proteasome-like degradation complex; this subunit has chaperone activity. The binding of ATP and its subsequent hydrolysis by HslU are essential for unfolding of protein substrates subsequently hydrolyzed by HslV. HslU recognizes the N-terminal part of its protein substrates and unfolds these before they are guided to HslV for hydrolysis. The sequence is that of ATP-dependent protease ATPase subunit HslU from Rhizobium johnstonii (strain DSM 114642 / LMG 32736 / 3841) (Rhizobium leguminosarum bv. viciae).